A 1404-amino-acid polypeptide reads, in one-letter code: DNA-directed RNA polymerase subunit beta' (1404 aa).

Residues Cys70, Cys72, Cys85, and Cys88 each coordinate Zn(2+). Mg(2+)-binding residues include Asp460, Asp462, and Asp464. Cys814, Cys888, Cys895, and Cys898 together coordinate Zn(2+).

It belongs to the RNA polymerase beta' chain family. As to quaternary structure, the RNAP catalytic core consists of 2 alpha, 1 beta, 1 beta' and 1 omega subunit. When a sigma factor is associated with the core the holoenzyme is formed, which can initiate transcription. Mg(2+) serves as cofactor. Requires Zn(2+) as cofactor.

The enzyme catalyses RNA(n) + a ribonucleoside 5'-triphosphate = RNA(n+1) + diphosphate. DNA-dependent RNA polymerase catalyzes the transcription of DNA into RNA using the four ribonucleoside triphosphates as substrates. This chain is DNA-directed RNA polymerase subunit beta', found in Shewanella loihica (strain ATCC BAA-1088 / PV-4).